A 370-amino-acid polypeptide reads, in one-letter code: Cell division protein DivIB (370 aa).

The tract at residues 1–65 is disordered; the sequence is MKKKKDEELT…SNKKGTKRIV (65 aa). Over 1–74 the chain is Cytoplasmic; that stretch reads MKKKKDEELT…VKEQRLSRQK (74 aa). 2 stretches are compositionally biased toward basic residues: residues 25-34 and 47-63; these read SRFKRKRKAT and RNNR…GTKR. A helical membrane pass occupies residues 75-95; the sequence is LGILIGSTLIVIALFFGYFYS. Over 96–370 the chain is Extracellular; the sequence is SISRVQKFSV…STVNTQQDID (275 aa). The POTRA domain maps to 98–169; sequence SRVQKFSVSG…GKVKIKVKEN (72 aa). Positions 295–370 are disordered; sequence SGWTDEAKAA…STVNTQQDID (76 aa). Low complexity-rich tracts occupy residues 304–314 and 327–342; these read ASESSKSAESS and SESA…STET. Over residues 356–370 the composition is skewed to polar residues; sequence SSNAESTVNTQQDID.

Belongs to the FtsQ/DivIB family. DivIB subfamily.

It is found in the cell membrane. Cell division protein that may be involved in stabilizing or promoting the assembly of the division complex. The polypeptide is Cell division protein DivIB (Pediococcus pentosaceus (strain ATCC 25745 / CCUG 21536 / LMG 10740 / 183-1w)).